The sequence spans 277 residues: Sarcosine/dimethylglycine N-methyltransferase (277 aa).

Belongs to the methyltransferase superfamily. Monomer.

The enzyme catalyses sarcosine + 2 S-adenosyl-L-methionine = glycine betaine + 2 S-adenosyl-L-homocysteine + 2 H(+). It catalyses the reaction sarcosine + S-adenosyl-L-methionine = N,N-dimethylglycine + S-adenosyl-L-homocysteine + H(+). The catalysed reaction is N,N-dimethylglycine + S-adenosyl-L-methionine = glycine betaine + S-adenosyl-L-homocysteine + H(+). The protein operates within amine and polyamine biosynthesis; betaine biosynthesis via glycine pathway; betaine from glycine: step 2/3. It participates in amine and polyamine biosynthesis; betaine biosynthesis via glycine pathway; betaine from glycine: step 3/3. Inhibited by n-butylic acid and S-adenosyl-L-homocysteine. In terms of biological role, catalyzes the methylation of sarcosine and dimethylglycine to dimethylglycine and betaine, respectively, with S-adenosylmethionine (AdoMet) acting as the methyl donor. Activity with sarcosine is much weaker than activity with dimethylglycine. This is Sarcosine/dimethylglycine N-methyltransferase from Aphanothece halophytica.